The sequence spans 350 residues: Fe(3+) ions import ATP-binding protein FbpC (350 aa).

In terms of domain architecture, ABC transporter spans 4-236; that stretch reads LDIINLSKSF…PNDEQTAHFL (233 aa). 36 to 43 provides a ligand contact to ATP; that stretch reads GPSGSGKT.

The protein belongs to the ABC transporter superfamily. Fe(3+) ion importer (TC 3.A.1.10) family. The complex is composed of two ATP-binding proteins (FbpC), two transmembrane proteins (FbpB) and a solute-binding protein (FbpA).

The protein resides in the cell inner membrane. The enzyme catalyses Fe(3+)(out) + ATP + H2O = Fe(3+)(in) + ADP + phosphate + H(+). Part of the ABC transporter complex FbpABC involved in Fe(3+) ions import. Responsible for energy coupling to the transport system. In Pseudomonas fluorescens (strain Pf0-1), this protein is Fe(3+) ions import ATP-binding protein FbpC.